The chain runs to 132 residues: Ribosome-binding factor A (132 aa).

Belongs to the RbfA family. In terms of assembly, monomer. Binds 30S ribosomal subunits, but not 50S ribosomal subunits or 70S ribosomes.

It localises to the cytoplasm. In terms of biological role, one of several proteins that assist in the late maturation steps of the functional core of the 30S ribosomal subunit. Associates with free 30S ribosomal subunits (but not with 30S subunits that are part of 70S ribosomes or polysomes). Required for efficient processing of 16S rRNA. May interact with the 5'-terminal helix region of 16S rRNA. In Pseudomonas putida (strain GB-1), this protein is Ribosome-binding factor A.